A 601-amino-acid polypeptide reads, in one-letter code: Sulfite reductase [NADPH] flavoprotein alpha-component (601 aa).

Residues 65 to 203 (ITIISASQTG…NYNKWSQDLL (139 aa)) enclose the Flavodoxin-like domain. FMN-binding positions include 71–76 (SQTGNA), 118–121 (STQG), and 154–163 (LGDTSYNLFC). Residues 236–450 (KNPAEGIILT…IQTNDNFRLP (215 aa)) form the FAD-binding FR-type domain. FAD is bound by residues T324, I358, 388–391 (RLYS), 406–408 (TVG), and 421–424 (GGAS). NADP(+) is bound by residues 521–522 (SQ), 527–531 (KIYVQ), and D563. Y601 contacts FAD.

The protein belongs to the NADPH-dependent sulphite reductase flavoprotein subunit CysJ family. This sequence in the N-terminal section; belongs to the flavodoxin family. It in the C-terminal section; belongs to the flavoprotein pyridine nucleotide cytochrome reductase family. In terms of assembly, alpha(8)-beta(8). The alpha component is a flavoprotein, the beta component is a hemoprotein. FAD is required as a cofactor. FMN serves as cofactor.

The enzyme catalyses hydrogen sulfide + 3 NADP(+) + 3 H2O = sulfite + 3 NADPH + 4 H(+). Its pathway is sulfur metabolism; hydrogen sulfide biosynthesis; hydrogen sulfide from sulfite (NADPH route): step 1/1. Functionally, component of the sulfite reductase complex that catalyzes the 6-electron reduction of sulfite to sulfide. This is one of several activities required for the biosynthesis of L-cysteine from sulfate. The flavoprotein component catalyzes the electron flow from NADPH -&gt; FAD -&gt; FMN to the hemoprotein component. This chain is Sulfite reductase [NADPH] flavoprotein alpha-component, found in Buchnera aphidicola subsp. Acyrthosiphon pisum (strain APS) (Acyrthosiphon pisum symbiotic bacterium).